Here is a 23-residue protein sequence, read N- to C-terminus: Septenin 2c (23 aa).

In terms of tissue distribution, expressed in skin granular glands.

The protein resides in the secreted. In terms of biological role, may act as an antimicrobial peptide. This chain is Septenin 2c, found in Osteopilus septentrionalis (Cuban treefrog).